The primary structure comprises 118 residues: Small ribosomal subunit protein uS13 (118 aa).

The disordered stretch occupies residues 94 to 118 (GLPVRGQRTKTNARTRKGPRKPIKK).

This sequence belongs to the universal ribosomal protein uS13 family. Part of the 30S ribosomal subunit. Forms a loose heterodimer with protein S19. Forms two bridges to the 50S subunit in the 70S ribosome.

Functionally, located at the top of the head of the 30S subunit, it contacts several helices of the 16S rRNA. In the 70S ribosome it contacts the 23S rRNA (bridge B1a) and protein L5 of the 50S subunit (bridge B1b), connecting the 2 subunits; these bridges are implicated in subunit movement. Contacts the tRNAs in the A and P-sites. The polypeptide is Small ribosomal subunit protein uS13 (Mannheimia succiniciproducens (strain KCTC 0769BP / MBEL55E)).